We begin with the raw amino-acid sequence, 447 residues long: Protein king tubby (447 aa).

The segment at 54-84 is disordered; sequence GSPQNPDQILSNNSSSITMNSSRNNSNNMRS. A compositionally biased stretch (low complexity) spans 62–84; it reads ILSNNSSSITMNSSRNNSNNMRS. The residue at position 136 (S136) is a Phosphoserine. Over residues 168 to 182 the composition is skewed to low complexity; sequence EGAAMEGSNGAANGS. The segment at 168 to 191 is disordered; it reads EGAAMEGSNGAANGSGSVGGSGES.

Belongs to the TUB family.

The protein localises to the cytoplasm. Its subcellular location is the nucleus. It localises to the cell projection. It is found in the cilium membrane. The protein resides in the rhabdomere. The sequence is that of Protein king tubby from Drosophila grimshawi (Hawaiian fruit fly).